The sequence spans 405 residues: Putative colanic acid polymerase (405 aa).

11 consecutive transmembrane segments (helical) span residues 5-25 (IRICSYLLLPLIYLLVNVKIA), 27-47 (LGESFPITIVTFLPVLLLLFL), 55-75 (LMIALGIGAGLTAFNYLFGQS), 81-101 (YVTSTMLFVYIVIIIGMVWSI), 117-137 (FFYLVVGLVVALAAVEMAQII), 171-191 (TALYFEPAFFALALISIWLSI), 204-224 (MILAGIILSGSFSGVMTFILF), 244-264 (PLALISLAVFLVGVVIAFPYI), 282-302 (IVGPLVMVGYSLTHIDGVVRF), 327-347 (GLYLLIIYFSWFAVFLSLWYM), and 376-396 (LFFTGSIFSPEYAFLIVCPFI).

It is found in the cell inner membrane. It participates in slime biogenesis; slime polysaccharide biosynthesis. In Escherichia coli (strain K12), this protein is Putative colanic acid polymerase (wcaD).